The chain runs to 273 residues: DnaJ homolog subfamily C member 27 (273 aa).

Positions 1 to 18 (MEANMPKRKEPGRSLRIK) are required for interaction with MAPK1. GTP is bound by residues 23 to 30 (GNAEVGKS), 71 to 75 (DMAGH), and 134 to 137 (NKID). Residues 217 to 273 (GSWDMLGVKPGASRDEVNKACRKLAVLLHPDKCVAPGSEDAFKAVVNARTALLKNIK) form the J domain.

The protein belongs to the small GTPase superfamily. Rab family. As to quaternary structure, interacts directly with MAPK1 (wild-type and kinase-deficient forms). Interacts directly (in GTP-bound form) with MAP2K1 (wild-type and kinase-deficient forms).

The protein localises to the nucleus. GTPase which can activate the MEK/ERK pathway and induce cell transformation when overexpressed. May act as a nuclear scaffold for MAPK1, probably by association with MAPK1 nuclear export signal leading to enhanced ERK1/ERK2 signaling. The sequence is that of DnaJ homolog subfamily C member 27 (DNAJC27) from Pongo abelii (Sumatran orangutan).